Reading from the N-terminus, the 822-residue chain is Fibroblast growth factor receptor 4 (822 aa).

Residues 1-35 form the signal peptide; sequence MGVQKDSRDIRWNRTTRPLALLLCGLLAFSALSCA. N-linked (GlcNAc...) asparagine glycans are attached at residues Asn13, Asn72, and Asn125. Residues 36–388 are Extracellular-facing; it reads RTLPEGRKAN…AEGPETRYTD (353 aa). Ig-like C2-type domains follow at residues 39 to 129, 157 to 259, and 268 to 368; these read PEGR…FTIS, PPYS…YLLD, and PILQ…AWLT. Cysteines 69 and 114 form a disulfide. The tract at residues 136 to 166 is disordered; that stretch reads SGDDDDEDHGREDSAGDMGEDPPYSTSYRAP. Cysteines 191 and 243 form a disulfide. N-linked (GlcNAc...) asparagine glycans are attached at residues Asn240, Asn277, Asn309, Asn330, and Asn341. Cys290 and Cys352 are oxidised to a cystine. Residues 389-409 form a helical membrane-spanning segment; the sequence is IIIYTSGSLALLMAAVIVVLC. The Cytoplasmic portion of the chain corresponds to 410–822; it reads RMQLPPTKTH…HHTTTSMVGT (413 aa). In terms of domain architecture, Protein kinase spans 486-774; it reads LVLGKPLGEG…ILATVAEEYL (289 aa). Residues 492–500 and Lys522 each bind ATP; that span reads LGEGCFGQV. Asp631 serves as the catalytic Proton acceptor. 3 positions are modified to phosphotyrosine; by autocatalysis: Tyr661, Tyr662, and Tyr773.

It belongs to the protein kinase superfamily. Tyr protein kinase family. Fibroblast growth factor receptor subfamily. Post-translationally, ubiquitinated. Subject to proteasomal degradation when not fully glycosylated. In terms of processing, autophosphorylated. Binding of FGF family members together with heparan sulfate proteoglycan or heparin promotes receptor dimerization and autophosphorylation on tyrosine residues. Autophosphorylation occurs in trans between the two FGFR molecules present in the dimer.

It localises to the cell membrane. The protein localises to the endosome. It is found in the endoplasmic reticulum. The enzyme catalyses L-tyrosyl-[protein] + ATP = O-phospho-L-tyrosyl-[protein] + ADP + H(+). Its activity is regulated as follows. Present in an inactive conformation in the absence of bound ligand. Ligand binding leads to dimerization and activation by autophosphorylation on tyrosine residues. Its function is as follows. Tyrosine-protein kinase that acts as a cell-surface receptor for fibroblast growth factors and plays a role in the regulation of cell proliferation, differentiation and migration, and in regulation of lipid metabolism, bile acid biosynthesis, glucose uptake, vitamin D metabolism and phosphate homeostasis. Required for normal down-regulation of the expression of CYP7A1, the rate-limiting enzyme in bile acid synthesis, in response to FGF19. Phosphorylates PLCG1 and FRS2. Ligand binding leads to the activation of several signaling cascades. Activation of PLCG1 leads to the production of the cellular signaling molecules diacylglycerol and inositol 1,4,5-trisphosphate. Phosphorylation of FRS2 triggers recruitment of GRB2, GAB1, PIK3R1 and SOS1, and mediates activation of RAS, MAPK1/ERK2, MAPK3/ERK1 and the MAP kinase signaling pathway, as well as of the AKT1 signaling pathway. This chain is Fibroblast growth factor receptor 4 (FGFR4), found in Pleurodeles waltl (Iberian ribbed newt).